Reading from the N-terminus, the 524-residue chain is 11-oxo-beta-amyrin 30-oxidase (524 aa).

The helical transmembrane segment at 9-29 threads the bilayer; sequence GTTVIISVLSVLLAVIPWYLL. Residue C472 participates in heme binding.

The protein belongs to the cytochrome P450 family. The cofactor is heme. In terms of tissue distribution, expressed in flowers. Detected in roots upon salt treatment.

The protein localises to the membrane. The catalysed reaction is 11-oxo-beta-amyrin + 3 reduced [NADPH--hemoprotein reductase] + 3 O2 = glycyrrhetinate + 3 oxidized [NADPH--hemoprotein reductase] + 4 H2O + 4 H(+). Involved in the biosynthesis of triterpenoid saponins. Catalyzes three sequential oxidation steps at C-30 of 11-oxo-beta-amyrin. Also able to catalyze sequential C-30 hydroxylation of beta-amyrin to produce 30-hydroxy-beta-amyrin and 11-deoxoglycyrrhetinic acid. The chain is 11-oxo-beta-amyrin 30-oxidase (CYP72A63) from Medicago truncatula (Barrel medic).